Consider the following 290-residue polypeptide: Small ribosomal subunit biogenesis GTPase RsgA (290 aa).

In terms of domain architecture, CP-type G spans 62–213 (KNSLVRPPIV…IADTPGFSSL (152 aa)). GTP contacts are provided by residues 111–114 (SKMD) and 156–164 (GQTGVGKST). Zn(2+) contacts are provided by Cys237, Cys242, His244, and Cys250.

It belongs to the TRAFAC class YlqF/YawG GTPase family. RsgA subfamily. Monomer. Associates with 30S ribosomal subunit, binds 16S rRNA. Zn(2+) serves as cofactor.

It localises to the cytoplasm. In terms of biological role, one of several proteins that assist in the late maturation steps of the functional core of the 30S ribosomal subunit. Helps release RbfA from mature subunits. May play a role in the assembly of ribosomal proteins into the subunit. Circularly permuted GTPase that catalyzes slow GTP hydrolysis, GTPase activity is stimulated by the 30S ribosomal subunit. This is Small ribosomal subunit biogenesis GTPase RsgA from Streptococcus pyogenes serotype M6 (strain ATCC BAA-946 / MGAS10394).